The following is a 324-amino-acid chain: Beta-ketoacyl-[acyl-carrier-protein] synthase III (324 aa).

Active-site residues include Cys112 and His249. The segment at 250–254 is ACP-binding; the sequence is QANIR. Asn279 is an active-site residue.

It belongs to the thiolase-like superfamily. FabH family. Homodimer.

The protein resides in the cytoplasm. It catalyses the reaction malonyl-[ACP] + acetyl-CoA + H(+) = 3-oxobutanoyl-[ACP] + CO2 + CoA. It functions in the pathway lipid metabolism; fatty acid biosynthesis. Functionally, catalyzes the condensation reaction of fatty acid synthesis by the addition to an acyl acceptor of two carbons from malonyl-ACP. Catalyzes the first condensation reaction which initiates fatty acid synthesis and may therefore play a role in governing the total rate of fatty acid production. Possesses both acetoacetyl-ACP synthase and acetyl transacylase activities. Its substrate specificity determines the biosynthesis of branched-chain and/or straight-chain of fatty acids. The polypeptide is Beta-ketoacyl-[acyl-carrier-protein] synthase III (Streptococcus sanguinis (strain SK36)).